We begin with the raw amino-acid sequence, 90 residues long: Acylphosphatase (90 aa).

The Acylphosphatase-like domain occupies 3–90 (RVLIKLTGKV…DIYLDFSIVR (88 aa)). Residues Arg-18 and Asn-36 contribute to the active site.

It belongs to the acylphosphatase family.

The enzyme catalyses an acyl phosphate + H2O = a carboxylate + phosphate + H(+). This chain is Acylphosphatase (acyP), found in Shewanella oneidensis (strain ATCC 700550 / JCM 31522 / CIP 106686 / LMG 19005 / NCIMB 14063 / MR-1).